A 446-amino-acid chain; its full sequence is Signal recognition particle 54 kDa protein (446 aa).

Residues 103 to 110, 185 to 189, and 245 to 248 each bind GTP; these read GVQGTGKT, DTAGR, and TKMD.

The protein belongs to the GTP-binding SRP family. SRP54 subfamily. As to quaternary structure, part of the signal recognition particle protein translocation system, which is composed of SRP and FtsY. Archaeal SRP consists of a 7S RNA molecule of 300 nucleotides and two protein subunits: SRP54 and SRP19.

Its subcellular location is the cytoplasm. It carries out the reaction GTP + H2O = GDP + phosphate + H(+). Involved in targeting and insertion of nascent membrane proteins into the cytoplasmic membrane. Binds to the hydrophobic signal sequence of the ribosome-nascent chain (RNC) as it emerges from the ribosomes. The SRP-RNC complex is then targeted to the cytoplasmic membrane where it interacts with the SRP receptor FtsY. The protein is Signal recognition particle 54 kDa protein of Metallosphaera sedula (strain ATCC 51363 / DSM 5348 / JCM 9185 / NBRC 15509 / TH2).